Reading from the N-terminus, the 564-residue chain is Lamassu protein LmuB (564 aa).

Its function is as follows. Component of antiviral defense system Lamassu type II, composed of LmuA and LmuB. Expression of Lamassu type II in B.subtilis (strain BEST7003) confers resistance to phage SpBeta. May be an ATPase. This is Lamassu protein LmuB from Bacillus cereus (strain VD014).